Consider the following 272-residue polypeptide: Catechol O-methyltransferase (272 aa).

The Cytoplasmic portion of the chain corresponds to 1–6 (MLEAPP). A helical; Signal-anchor for type II membrane protein membrane pass occupies residues 7-27 (LLLVAGGVGLALLALRWLATT). The Extracellular segment spans residues 28–272 (DLQFFGRAFI…YKGLSGPARP (245 aa)). S-adenosyl-L-methionine-binding positions include valine 93, glutamate 115, serine 123, glutamate 141, 168 to 171 (GASQ), serine 170, and aspartate 192. Residue aspartate 192 coordinates Mg(2+). Lysine 195 is a binding site for substrate. Mg(2+)-binding residues include aspartate 220 and asparagine 221. Substrate is bound by residues asparagine 221 and glutamate 250. Serine 267 is modified (phosphoserine).

This sequence belongs to the class I-like SAM-binding methyltransferase superfamily. Cation-dependent O-methyltransferase family. It depends on Mg(2+) as a cofactor.

It localises to the cytoplasm. It is found in the cell membrane. It catalyses the reaction a catechol + S-adenosyl-L-methionine = a guaiacol + S-adenosyl-L-homocysteine + H(+). The catalysed reaction is 2-hydroxyestrone + S-adenosyl-L-methionine = 2-hydroxy-3-methoxy-estrone + S-adenosyl-L-homocysteine + H(+). The enzyme catalyses 4-hydroxyestrone + S-adenosyl-L-methionine = 4-methoxyestrone + S-adenosyl-L-homocysteine + H(+). It carries out the reaction 2-hydroxyestrone + S-adenosyl-L-methionine = 2-methoxyestrone + S-adenosyl-L-homocysteine + H(+). It catalyses the reaction 4-hydroxy-17beta-estradiol + S-adenosyl-L-methionine = 4-methoxy-17beta-estradiol + S-adenosyl-L-homocysteine + H(+). The catalysed reaction is 2-hydroxy-17beta-estradiol + S-adenosyl-L-methionine = 2-hydroxy-3-methoxy-17beta-estradiol + S-adenosyl-L-homocysteine + H(+). The enzyme catalyses 2-hydroxy-17beta-estradiol + S-adenosyl-L-methionine = 2-methoxy-17beta-estradiol + S-adenosyl-L-homocysteine + H(+). Its function is as follows. Catalyzes the O-methylation, and thereby the inactivation, of catecholamine neurotransmitters and catechol hormones. Also shortens the biological half-lives of certain neuroactive drugs, like L-DOPA, alpha-methyl DOPA and isoproterenol. The chain is Catechol O-methyltransferase (COMT) from Bos taurus (Bovine).